The chain runs to 524 residues: Bifunctional purine biosynthesis protein PurH (524 aa).

Residues Met-1–Thr-149 form the MGS-like domain.

The protein belongs to the PurH family.

It carries out the reaction (6R)-10-formyltetrahydrofolate + 5-amino-1-(5-phospho-beta-D-ribosyl)imidazole-4-carboxamide = 5-formamido-1-(5-phospho-D-ribosyl)imidazole-4-carboxamide + (6S)-5,6,7,8-tetrahydrofolate. The enzyme catalyses IMP + H2O = 5-formamido-1-(5-phospho-D-ribosyl)imidazole-4-carboxamide. The protein operates within purine metabolism; IMP biosynthesis via de novo pathway; 5-formamido-1-(5-phospho-D-ribosyl)imidazole-4-carboxamide from 5-amino-1-(5-phospho-D-ribosyl)imidazole-4-carboxamide (10-formyl THF route): step 1/1. It functions in the pathway purine metabolism; IMP biosynthesis via de novo pathway; IMP from 5-formamido-1-(5-phospho-D-ribosyl)imidazole-4-carboxamide: step 1/1. This Chlorobium phaeovibrioides (strain DSM 265 / 1930) (Prosthecochloris vibrioformis (strain DSM 265)) protein is Bifunctional purine biosynthesis protein PurH.